The chain runs to 247 residues: Probable transcriptional regulatory protein MS0710 (247 aa).

Belongs to the TACO1 family.

It is found in the cytoplasm. The protein is Probable transcriptional regulatory protein MS0710 of Mannheimia succiniciproducens (strain KCTC 0769BP / MBEL55E).